Here is a 197-residue protein sequence, read N- to C-terminus: MIDFDGYRPNVGIVICNKVGQVLWARRFGQNSWQFPQGGINEGENIETAMYRELYEEVGLTKKDVRLLWASKYWLKYKLPKRLVRNDASQPVCIGQKQRWFLLQLVSDESAVNLKTTKSPEFDGWRWVSFWYPVRQVVSFKRDVYRKVMREFAAILLNETRKGETERSVLEASDKREYQRRETRKSARAWNHYPKGK.

The 145-residue stretch at 6–150 (GYRPNVGIVI…KRDVYRKVMR (145 aa)) folds into the Nudix hydrolase domain. The short motif at 38-59 (GGINEGENIETAMYRELYEEVG) is the Nudix box element.

Belongs to the Nudix hydrolase family. RppH subfamily. A divalent metal cation serves as cofactor.

In terms of biological role, accelerates the degradation of transcripts by removing pyrophosphate from the 5'-end of triphosphorylated RNA, leading to a more labile monophosphorylated state that can stimulate subsequent ribonuclease cleavage. In Haemophilus ducreyi (strain 35000HP / ATCC 700724), this protein is RNA pyrophosphohydrolase.